The sequence spans 420 residues: UDP-N-acetylglucosamine 1-carboxyvinyltransferase (420 aa).

22–23 contacts phosphoenolpyruvate; it reads KN. Residue Arg95 participates in UDP-N-acetyl-alpha-D-glucosamine binding. Catalysis depends on Cys119, which acts as the Proton donor. Position 119 is a 2-(S-cysteinyl)pyruvic acid O-phosphothioketal (Cys119). Residues 124 to 128, Asp307, and Ile329 each bind UDP-N-acetyl-alpha-D-glucosamine; that span reads RPIDQ.

This sequence belongs to the EPSP synthase family. MurA subfamily.

The protein resides in the cytoplasm. It carries out the reaction phosphoenolpyruvate + UDP-N-acetyl-alpha-D-glucosamine = UDP-N-acetyl-3-O-(1-carboxyvinyl)-alpha-D-glucosamine + phosphate. It functions in the pathway cell wall biogenesis; peptidoglycan biosynthesis. In terms of biological role, cell wall formation. Adds enolpyruvyl to UDP-N-acetylglucosamine. The chain is UDP-N-acetylglucosamine 1-carboxyvinyltransferase from Myxococcus xanthus (strain DK1622).